Here is a 904-residue protein sequence, read N- to C-terminus: Toll-like receptor 3 (904 aa).

The first 26 residues, 1–26, serve as a signal peptide directing secretion; it reads MSRPLPYHIHFFSGLLTCWILCTSSA. The LRRNT domain occupies 27–52; sequence HKCTVRHEVADCSHLKLTQIPDDLPT. At 27–705 the chain is on the lumenal side; that stretch reads HKCTVRHEVA…PCKDSAPFEL (679 aa). Cys29 and Cys38 form a disulfide bridge. N-linked (GlcNAc...) asparagine glycans are attached at residues Asn53, Asn58, and Asn71. LRR repeat units follow at residues 53-74, 77-98, 101-122, 125-146, 149-170, and 173-194; these read NITV…NFTR, QLTT…LCQS, WLEI…TFIF, NLTE…PFKN, NLIK…TQLQ, and NLQE…EFDF. Cys96 and Cys123 are oxidised to a cystine. Asn125 carries an N-linked (GlcNAc...) asparagine glycan. A glycan (N-linked (GlcNAc...) asparagine) is linked at Asn197. LRR repeat units lie at residues 199–220 and 223–245; these read SLKR…CFHT and ELSG…LCLE. N-linked (GlcNAc...) asparagine glycans are attached at residues Asn248, Asn253, Asn276, and Asn292. LRR repeat units follow at residues 250-271, 276-297, 300-321, 324-345, 357-378, 381-401, 409-430, 433-455, 466-487, 508-529, 532-553, 564-585, 588-609, and 612-633; these read SIEN…TFDG, NLTT…SFAW, HLEY…SFYG, NLRR…TSLP, CLEY…TFTG, RLKF…TNET, PLLL…AFSW, HLEV…EWRG, YNKY…QRLM, NLVI…LLKG, KLEI…ANPG, HLHI…AFKD, ELKS…VFDN, and SLKS…VFGP. An N-linked (GlcNAc...) asparagine glycan is attached at Asn399. N-linked (GlcNAc...) asparagine glycosylation is found at Asn637, Asn663, and Asn668. The 54-residue stretch at 646 to 699 folds into the LRRCT domain; the sequence is NPFDCTCESIAWFVNWINITHTNISELSNHYLCNTPPQYHGYPVMLFDVSPCKD. 2 disulfide bridges follow: Cys650-Cys678 and Cys652-Cys697. A helical membrane pass occupies residues 706 to 726; it reads LFMININILLIFIFIVLLIHF. Residues 727 to 904 are Cytoplasmic-facing; the sequence is EGWRISFYWN…VALGSRNSAH (178 aa). In terms of domain architecture, TIR spans 754–897; sequence FEYAAYIIHA…AFHHKLKVAL (144 aa). Position 759 is a phosphotyrosine (Tyr759). Residues Lys765, Lys812, and Lys831 each participate in a glycyl lysine isopeptide (Lys-Gly) (interchain with G-Cter in ubiquitin) cross-link. Phosphotyrosine is present on Tyr858.

It belongs to the Toll-like receptor family. In terms of assembly, monomer and homodimer; dimerization is triggered by ligand-binding, the signaling unit is composed of one ds-RNA of around 40 bp and two TLR3 molecules, and lateral clustering of signaling units along the length of the ds-RNA ligand is required for TLR3 signal transduction. Interacts (via transmembrane domain) with UNC93B1; the interaction is required for transport from the ER to the endosomes. Interacts with TICAM1 (via the TIR domain) in response to poly(I:C) and this interaction is enhanced in the presence of WDFY1. Interacts with SRC; upon binding of double-stranded RNA. The tyrosine-phosphorylated form (via TIR domain) interacts with WDFY1 (via WD repeat 2) in response to poly(I:C). Post-translationally, TLR3 signaling requires a proteolytic cleavage mediated by cathepsins CTSB and CTSH, the cleavage occurs between amino acids 252 and 346. The cleaved form of TLR3 is the predominant form found in endosomes. Ubiquitinated by TRIM3; leading to recognition and sorting of polyubiquitinated TLR3 by the ESCRT complexes. Ubiquitinated by ZNRF1 via 'Lys-63'-linked ubiquitin chains; leading to TLR3 lysosomal trafficking and degradation. Ubiquitinated by RNF170 at Lys-765 via 'Lys-48'-linked ubiquitin chains; leading to TLR3 proteasomal degradation.

The protein localises to the endoplasmic reticulum membrane. It localises to the endosome membrane. The protein resides in the early endosome. Key component of innate and adaptive immunity. TLRs (Toll-like receptors) control host immune response against pathogens through recognition of molecular patterns specific to microorganisms. TLR3 is a nucleotide-sensing TLR which is activated by double-stranded RNA, a sign of viral infection. Acts via the adapter TRIF/TICAM1, leading to NF-kappa-B activation, IRF3 nuclear translocation, cytokine secretion and the inflammatory response. The protein is Toll-like receptor 3 (TLR3) of Bos taurus (Bovine).